The chain runs to 266 residues: Undecaprenyl-diphosphatase (266 aa).

A run of 8 helical transmembrane segments spans residues 1–21 (MDTFQVIILALIQGLTEFLPI), 39–59 (QGLSFDVAVNTGSLLAVVMYF), 87–107 (WWIILATIPAVIVGFTAKDFI), 115–135 (AVIATTTIVFGLLLWWADRMF), 144–164 (VGWKKALVIGVAQAMALIPGT), 183–203 (AAARFSFLMSVPVSLGAAILV), 218–238 (ALSLGIIVSFVAAYTCIHLFL), and 246–266 (MTPFVIYRLALGAILCAFMFA).

This sequence belongs to the UppP family.

Its subcellular location is the cell inner membrane. It carries out the reaction di-trans,octa-cis-undecaprenyl diphosphate + H2O = di-trans,octa-cis-undecaprenyl phosphate + phosphate + H(+). Functionally, catalyzes the dephosphorylation of undecaprenyl diphosphate (UPP). Confers resistance to bacitracin. The polypeptide is Undecaprenyl-diphosphatase (Shewanella sediminis (strain HAW-EB3)).